Consider the following 384-residue polypeptide: Conidiophore development protein hymA (384 aa).

Over residues 362–374 (EPIEPSRSAREPS) the composition is skewed to basic and acidic residues. Positions 362 to 384 (EPIEPSRSAREPSRSTANTTTVA) are disordered.

Belongs to the Mo25 family.

The protein resides in the cytoplasm. Functionally, required for conidiophore development. This is Conidiophore development protein hymA (hymA) from Emericella nidulans (strain FGSC A4 / ATCC 38163 / CBS 112.46 / NRRL 194 / M139) (Aspergillus nidulans).